A 944-amino-acid polypeptide reads, in one-letter code: Neutral alpha-glucosidase AB (944 aa).

The N-terminal stretch at 1–32 (MAAVAAVAARRRRSWTGLVLACLGVCLGLTLA) is a signal peptide. Cys41 and Cys47 are disulfide-bonded. Phosphoserine is present on Ser52. Residue Asn97 is glycosylated (N-linked (GlcNAc...) asparagine). The interval 181–225 (QRAPRVSQGSKDPAEGDGAQPEEAPGDGDKPEEIQGKAEKDEPGA) is disordered. Positions 207-225 (DGDKPEEIQGKAEKDEPGA) are enriched in basic and acidic residues. Substrate contacts are provided by Asp283 and Asp429. The active-site Nucleophile is Asp542. Arg602 provides a ligand contact to substrate. The Proton donor role is filled by Asp618. Cys633 and Cys644 are disulfide-bonded. His676 contributes to the substrate binding site.

Belongs to the glycosyl hydrolase 31 family. Heterodimer of a catalytic alpha subunit (GANAB) and a beta subunit (PRKCSH). Binds glycosylated PTPRC. In terms of processing, contains sialylated polysaccharide chains.

The protein localises to the endoplasmic reticulum. It is found in the golgi apparatus. It localises to the melanosome. It catalyses the reaction N(4)-(alpha-D-Glc-(1-&gt;3)-alpha-D-Man-(1-&gt;2)-alpha-D-Man-(1-&gt;2)-alpha-D-Man-(1-&gt;3)-[alpha-D-Man-(1-&gt;2)-alpha-D-Man-(1-&gt;3)-[alpha-D-Man-(1-&gt;2)-alpha-D-Man-(1-&gt;6)]-alpha-D-Man-(1-&gt;6)]-beta-D-Man-(1-&gt;4)-beta-D-GlcNAc-(1-&gt;4)-beta-D-GlcNAc)-L-asparaginyl-[protein] + H2O = N(4)-(alpha-D-Man-(1-&gt;2)-alpha-D-Man-(1-&gt;2)-alpha-D-Man-(1-&gt;3)-[alpha-D-Man-(1-&gt;2)-alpha-D-Man-(1-&gt;3)-[alpha-D-Man-(1-&gt;2)-alpha-D-Man-(1-&gt;6)]-alpha-D-Man-(1-&gt;6)]-beta-D-Man-(1-&gt;4)-beta-D-GlcNAc-(1-&gt;4)-beta-D-GlcNAc)-L-asparaginyl-[protein] (N-glucan mannose isomer 9A1,2,3B1,2,3) + beta-D-glucose. The enzyme catalyses N(4)-(alpha-D-Glc-(1-&gt;3)-alpha-D-Glc-(1-&gt;3)-alpha-D-Man-(1-&gt;2)-alpha-D-Man-(1-&gt;2)-alpha-D-Man-(1-&gt;3)-[alpha-D-Man-(1-&gt;2)-alpha-D-Man-(1-&gt;3)-[alpha-D-Man-(1-&gt;2)-alpha-D-Man-(1-&gt;6)]-alpha-D-Man-(1-&gt;6)]-beta-D-Man-(1-&gt;4)-beta-D-GlcNAc-(1-&gt;4)-beta-D-GlcNAc)-L-asparaginyl-[protein] + H2O = N(4)-(alpha-D-Glc-(1-&gt;3)-alpha-D-Man-(1-&gt;2)-alpha-D-Man-(1-&gt;2)-alpha-D-Man-(1-&gt;3)-[alpha-D-Man-(1-&gt;2)-alpha-D-Man-(1-&gt;3)-[alpha-D-Man-(1-&gt;2)-alpha-D-Man-(1-&gt;6)]-alpha-D-Man-(1-&gt;6)]-beta-D-Man-(1-&gt;4)-beta-D-GlcNAc-(1-&gt;4)-beta-D-GlcNAc)-L-asparaginyl-[protein] + beta-D-glucose. It participates in glycan metabolism; N-glycan metabolism. Functionally, catalytic subunit of glucosidase II that cleaves sequentially the 2 innermost alpha-1,3-linked glucose residues from the Glc(2)Man(9)GlcNAc(2) oligosaccharide precursor of immature glycoproteins. Required for PKD1/Polycystin-1 and PKD2/Polycystin-2 maturation and localization to the cell surface and cilia. The chain is Neutral alpha-glucosidase AB (GANAB) from Sus scrofa (Pig).